Reading from the N-terminus, the 589-residue chain is Sphingosine-1-phosphate lyase (589 aa).

The Lumenal portion of the chain corresponds to M1–D58. N-linked (GlcNAc...) asparagine glycosylation is present at N6. A helical membrane pass occupies residues Y59–L76. Over K77–K589 the chain is Cytoplasmic. K380 carries the post-translational modification N6-(pyridoxal phosphate)lysine.

It belongs to the group II decarboxylase family. Sphingosine-1-phosphate lyase subfamily. Homodimer. Requires pyridoxal 5'-phosphate as cofactor. Post-translationally, glycosylated.

It localises to the endoplasmic reticulum membrane. It catalyses the reaction sphinganine 1-phosphate = hexadecanal + phosphoethanolamine. The catalysed reaction is (4R)-hydroxysphinganine 1-phosphate = (2R)-hydroxyhexadecanal + phosphoethanolamine. Its pathway is lipid metabolism; sphingolipid metabolism. Its function is as follows. Sphingosine-1-phosphate lyase that cleaves phosphorylated sphingoid bases (PSBs), such as sphingosine-1-phosphate, into fatty aldehydes and phosphoethanolamine. Prefers C-16 dihydrosphingosine-l-phosphate (DHS-P) as a substrate. Regulates intracellular levels of sphingolipid long-chain base phosphates (LCBPs). Plays a role in the regulation of global responses to nutrient deprivation in yeast. The polypeptide is Sphingosine-1-phosphate lyase (Saccharomyces cerevisiae (strain ATCC 204508 / S288c) (Baker's yeast)).